Here is a 63-residue protein sequence, read N- to C-terminus: Large ribosomal subunit protein bL32 (63 aa).

The tract at residues 1 to 22 (MANPKAKMSKSRRDKRRAQFNA) is disordered. The span at 7–18 (KMSKSRRDKRRA) shows a compositional bias: basic residues.

This sequence belongs to the bacterial ribosomal protein bL32 family.

This chain is Large ribosomal subunit protein bL32, found in Chlorobium limicola (strain DSM 245 / NBRC 103803 / 6330).